The chain runs to 354 residues: Hyaluronan and proteoglycan link protein 1 (354 aa).

Positions 1-15 (MKSLLLLVLISICGA) are excised as a propeptide. Asn21 and Asn56 each carry an N-linked (GlcNAc...) asparagine glycan. The Ig-like V-type domain maps to 38–152 (PRLLVEAEQA…EGLEDDTAVV (115 aa)). 5 cysteine pairs are disulfide-bonded: Cys61/Cys139, Cys181/Cys252, Cys205/Cys226, Cys279/Cys349, and Cys304/Cys325. 2 Link domains span residues 159 to 254 (VVFP…FCFT) and 259 to 351 (GRFY…YCFR).

It belongs to the HAPLN family.

The protein localises to the secreted. It is found in the extracellular space. The protein resides in the extracellular matrix. Its function is as follows. Stabilizes the aggregates of proteoglycan monomers with hyaluronic acid in the extracellular cartilage matrix. The protein is Hyaluronan and proteoglycan link protein 1 (HAPLN1) of Equus caballus (Horse).